Reading from the N-terminus, the 163-residue chain is Thiol peroxidase (163 aa).

The 147-residue stretch at leucine 16 to alanine 162 folds into the Thioredoxin domain. The Cysteine sulfenic acid (-SOH) intermediate role is filled by cysteine 58. A disulfide bridge connects residues cysteine 58 and cysteine 92.

This sequence belongs to the peroxiredoxin family. Tpx subfamily. Homodimer.

The catalysed reaction is a hydroperoxide + [thioredoxin]-dithiol = an alcohol + [thioredoxin]-disulfide + H2O. In terms of biological role, thiol-specific peroxidase that catalyzes the reduction of hydrogen peroxide and organic hydroperoxides to water and alcohols, respectively. Plays a role in cell protection against oxidative stress by detoxifying peroxides. This is Thiol peroxidase from Streptococcus pneumoniae serotype 2 (strain D39 / NCTC 7466).